A 110-amino-acid polypeptide reads, in one-letter code: Large ribosomal subunit protein uL22 (110 aa).

The protein belongs to the universal ribosomal protein uL22 family. As to quaternary structure, part of the 50S ribosomal subunit.

In terms of biological role, this protein binds specifically to 23S rRNA; its binding is stimulated by other ribosomal proteins, e.g. L4, L17, and L20. It is important during the early stages of 50S assembly. It makes multiple contacts with different domains of the 23S rRNA in the assembled 50S subunit and ribosome. Functionally, the globular domain of the protein is located near the polypeptide exit tunnel on the outside of the subunit, while an extended beta-hairpin is found that lines the wall of the exit tunnel in the center of the 70S ribosome. The chain is Large ribosomal subunit protein uL22 from Acinetobacter baylyi (strain ATCC 33305 / BD413 / ADP1).